Here is a 429-residue protein sequence, read N- to C-terminus: Histidine--tRNA ligase (429 aa).

The protein belongs to the class-II aminoacyl-tRNA synthetase family. Homodimer.

The protein localises to the cytoplasm. It catalyses the reaction tRNA(His) + L-histidine + ATP = L-histidyl-tRNA(His) + AMP + diphosphate + H(+). The chain is Histidine--tRNA ligase from Escherichia fergusonii (strain ATCC 35469 / DSM 13698 / CCUG 18766 / IAM 14443 / JCM 21226 / LMG 7866 / NBRC 102419 / NCTC 12128 / CDC 0568-73).